Consider the following 299-residue polypeptide: Nucleotide-binding protein SAV_6292 (299 aa).

Position 23 to 30 (23 to 30) interacts with ATP; it reads GMSGAGRS. 74–77 is a GTP binding site; that stretch reads DVRG.

The protein belongs to the RapZ-like family.

Its function is as follows. Displays ATPase and GTPase activities. The sequence is that of Nucleotide-binding protein SAV_6292 from Streptomyces avermitilis (strain ATCC 31267 / DSM 46492 / JCM 5070 / NBRC 14893 / NCIMB 12804 / NRRL 8165 / MA-4680).